The sequence spans 316 residues: Glutamyl-Q tRNA(Asp) synthetase (316 aa).

Residues 13–17 (RFAPS) and Asp49 each bind L-glutamate. A 'HIGH' region motif is present at residues 16–26 (PSPSGDLHFGS). Zn(2+) is bound by residues Cys105, Cys107, Tyr119, and Cys123. Positions 176 and 194 each coordinate L-glutamate. Residues 232 to 236 (KLSKQ) carry the 'KMSKS' region motif. Lys235 contacts ATP.

The protein belongs to the class-I aminoacyl-tRNA synthetase family. GluQ subfamily. Requires Zn(2+) as cofactor.

Its function is as follows. Catalyzes the tRNA-independent activation of glutamate in presence of ATP and the subsequent transfer of glutamate onto a tRNA(Asp). Glutamate is transferred on the 2-amino-5-(4,5-dihydroxy-2-cyclopenten-1-yl) moiety of the queuosine in the wobble position of the QUC anticodon. This is Glutamyl-Q tRNA(Asp) synthetase from Photorhabdus laumondii subsp. laumondii (strain DSM 15139 / CIP 105565 / TT01) (Photorhabdus luminescens subsp. laumondii).